The primary structure comprises 263 residues: tRNA (guanine-N(7)-)-methyltransferase (263 aa).

The tract at residues 1-39 (MVHHGQMHAQPGVGLRPDTPVASGQLPSTSIRSRRSGIS) is disordered. S-adenosyl-L-methionine is bound by residues E82, D107, N136, and D159. D159 is an active-site residue. Substrate is bound by residues K163, D195, and 232 to 235 (TKYE).

This sequence belongs to the class I-like SAM-binding methyltransferase superfamily. TrmB family.

It carries out the reaction guanosine(46) in tRNA + S-adenosyl-L-methionine = N(7)-methylguanosine(46) in tRNA + S-adenosyl-L-homocysteine. It functions in the pathway tRNA modification; N(7)-methylguanine-tRNA biosynthesis. Its function is as follows. Catalyzes the formation of N(7)-methylguanine at position 46 (m7G46) in tRNA. The chain is tRNA (guanine-N(7)-)-methyltransferase from Mycobacterium bovis (strain ATCC BAA-935 / AF2122/97).